The primary structure comprises 342 residues: Tryptophan--tRNA ligase (342 aa).

ATP-binding positions include 19 to 21 (QPS) and 27 to 28 (GN). The 'HIGH' region signature appears at 20–28 (PSGELTIGN). D143 contacts L-tryptophan. ATP-binding positions include 155–157 (GED), V194, and 203–207 (KMSKS). The 'KMSKS' region motif lies at 203-207 (KMSKS).

It belongs to the class-I aminoacyl-tRNA synthetase family. Homodimer.

The protein localises to the cytoplasm. The enzyme catalyses tRNA(Trp) + L-tryptophan + ATP = L-tryptophyl-tRNA(Trp) + AMP + diphosphate + H(+). Functionally, catalyzes the attachment of tryptophan to tRNA(Trp). The chain is Tryptophan--tRNA ligase from Yersinia pestis.